Consider the following 90-residue polypeptide: Small ribosomal subunit protein bS20 (90 aa).

Belongs to the bacterial ribosomal protein bS20 family.

Its function is as follows. Binds directly to 16S ribosomal RNA. This Rickettsia felis (strain ATCC VR-1525 / URRWXCal2) (Rickettsia azadi) protein is Small ribosomal subunit protein bS20.